A 1203-amino-acid chain; its full sequence is Regulator of telomere elongation helicase 1 (1203 aa).

Residues asparagine 7–glutamine 296 enclose the Helicase ATP-binding domain. Serine 42–threonine 49 provides a ligand contact to ATP. 4 residues coordinate [4Fe-4S] cluster: cysteine 145, cysteine 163, cysteine 172, and cysteine 207. The short motif at lysine 151–valine 167 is the Nuclear localization signal element. The short motif at aspartate 250 to histidine 253 is the DEAH box element. Positions glutamine 871–lysine 877 match the Nuclear localization signal motif. Disordered stretches follow at residues glutamine 998–glycine 1020 and threonine 1120–glutamine 1203. Over residues lysine 1123–serine 1134 the composition is skewed to basic and acidic residues. The PIP-box motif lies at glutamine 1160–phenylalanine 1167. Over residues glutamine 1169 to threonine 1181 the composition is skewed to basic and acidic residues.

This sequence belongs to the helicase family. RAD3/XPD subfamily. As to quaternary structure, interacts with TERF1. Interacts (via PIP-box) with PCNA; the interaction is direct and essential for suppressing telomere fragility. Interacts with MMS19; the interaction mediates the association of RTEL1 with the cytosolic iron-sulfur protein assembly (CIA) complex.

The protein localises to the nucleus. The enzyme catalyses ATP + H2O = ADP + phosphate + H(+). Functionally, a probable ATP-dependent DNA helicase implicated in telomere-length regulation, DNA repair and the maintenance of genomic stability. Acts as an anti-recombinase to counteract toxic recombination and limit crossover during meiosis. Regulates meiotic recombination and crossover homeostasis by physically dissociating strand invasion events and thereby promotes noncrossover repair by meiotic synthesis dependent strand annealing (SDSA) as well as disassembly of D loop recombination intermediates. Also disassembles T loops and prevents telomere fragility by counteracting telomeric G4-DNA structures, which together ensure the dynamics and stability of the telomere. The polypeptide is Regulator of telomere elongation helicase 1 (Rtel1) (Mus spretus (Western Mediterranean mouse)).